The sequence spans 465 residues: Ribosomal oxygenase 2 (465 aa).

One can recognise a JmjC domain in the interval 139 to 271 (QPQRFKDELW…NSWGDYLLDS (133 aa)). Fe cation is bound by residues histidine 179, aspartate 181, and histidine 240. Serine 309 is subject to Phosphoserine.

Belongs to the ROX family. MINA53 subfamily. Fe(2+) serves as cofactor.

It is found in the nucleus. Its subcellular location is the nucleolus. It catalyses the reaction L-histidyl-[ribosomal protein uL15] + 2-oxoglutarate + O2 = (3S)-3-hydroxy-L-histidyl-[ribosomal protein uL15] + succinate + CO2. The enzyme catalyses L-histidyl-[protein] + 2-oxoglutarate + O2 = (3S)-3-hydroxy-L-histidyl-[protein] + succinate + CO2. Functionally, oxygenase that can act as both a histone lysine demethylase and a ribosomal histidine hydroxylase. Is involved in the demethylation of trimethylated 'Lys-9' on histone H3 (H3K9me3), leading to an increase in ribosomal RNA expression. Also catalyzes the hydroxylation of 60S ribosomal protein L27a on 'His-39'. May play an important role in cell growth and survival. May be involved in ribosome biogenesis, most likely during the assembly process of pre-ribosomal particles. This Rattus norvegicus (Rat) protein is Ribosomal oxygenase 2.